A 493-amino-acid chain; its full sequence is C2H2-type transcription factor ffmA (493 aa).

Residues 1 to 18 show a composition bias toward low complexity; it reads MPMPQYTMQPQYPVSQPH. Disordered stretches follow at residues 1-50, 68-140, and 164-202; these read MPMP…SRYP, TTVG…YPDG, and EPPR…KNTT. 2 stretches are compositionally biased toward polar residues: residues 69 to 79 and 192 to 202; these read TVGSLPPSTFL and NGVNGTAKNTT. The C2H2-type 1 zinc finger occupies 212-234; the sequence is FPCPHCNKTYLHAKHLKRHLLRH. A C2H2-type 2; degenerate zinc finger spans residues 240–265; it reads YMCVLCKDTFSRSDILKRHFQKCSIR. Polar residues-rich tracts occupy residues 288–307 and 484–493; these read QAAA…TVPP and ASTTLGGDGK. 2 disordered regions span residues 288-316 and 468-493; these read QAAA…GATF and TTTA…GDGK.

This sequence belongs to the krueppel C2H2-type zinc-finger protein family.

The protein localises to the nucleus. Transcription factor that acts in coordination with atrR to regulate the expression of the ABC-type multidrug transporter abcG1 and thus plays a role in azole susceptibility. Regulates the expression of genes involved in fermentation. Is able to promote expression from the yeast FLO11 promoter. In Aspergillus fumigatus (strain CBS 144.89 / FGSC A1163 / CEA10) (Neosartorya fumigata), this protein is C2H2-type transcription factor ffmA.